A 76-amino-acid polypeptide reads, in one-letter code: Waprin-Rha1 (76 aa).

The signal sequence occupies residues 1–24 (MQARVFLLLLGVILLGMMGPMVSA). The WAP domain maps to 25–75 (QDGKAGSCPDVNQPIPPLGVCKTTCATDSNCPDIQKCCKNGCGHMSCTRPS). 4 disulfides stabilise this stretch: C32-C62, C45-C66, C49-C61, and C55-C71.

The protein belongs to the venom waprin family. In terms of tissue distribution, expressed by the venom gland.

It localises to the secreted. Its function is as follows. Damages membranes of susceptible bacteria. Has no hemolytic activity. Not toxic to mice. Does not inhibit the proteinases elastase and cathepsin G. In Rhabdophis tigrinus tigrinus (Tiger keelback snake), this protein is Waprin-Rha1.